A 547-amino-acid chain; its full sequence is uncharacterized protein (547 aa).

The next 12 membrane-spanning stretches (helical) occupy residues 33–53, 107–127, 145–165, 203–223, 231–251, 263–283, 298–318, 351–371, 397–417, 432–452, 470–490, and 499–519; these read PTFFFALFSAAYVFIDQIMVI, PLIVLLNAINIFIPLGTGVIF, TGLISTTVFGLITQFLVLSFA, VYILIGLNIIPMLSRLFFYLA, FIAIVPPIANLINILIVFLLV, VAGILGYLINFLAYIIYLIYL, LNKIDFNLLVVVSLIGMASFF, TLLTGPIAISNLASAAIFGLL, TVIICISFGSLIYLLTAVAFG, LDLANYFSLIVQAQVFFVATG, IVSLTHGLFVFIPLLFIFQAI, and VFIWLLTANAALAGLINIAFG.

The protein resides in the cell membrane. This is an uncharacterized protein from Mycoplasma genitalium (strain ATCC 33530 / DSM 19775 / NCTC 10195 / G37) (Mycoplasmoides genitalium).